A 98-amino-acid polypeptide reads, in one-letter code: NADH-ubiquinone oxidoreductase chain 4L (98 aa).

The next 3 helical transmembrane spans lie at 1-21, 29-49, and 61-81; these read MSMV…GLLM, SLLC…VTIL, and IILL…LVMV.

It belongs to the complex I subunit 4L family. In terms of assembly, core subunit of respiratory chain NADH dehydrogenase (Complex I) which is composed of 45 different subunits.

The protein localises to the mitochondrion inner membrane. The enzyme catalyses a ubiquinone + NADH + 5 H(+)(in) = a ubiquinol + NAD(+) + 4 H(+)(out). Functionally, core subunit of the mitochondrial membrane respiratory chain NADH dehydrogenase (Complex I) which catalyzes electron transfer from NADH through the respiratory chain, using ubiquinone as an electron acceptor. Part of the enzyme membrane arm which is embedded in the lipid bilayer and involved in proton translocation. The chain is NADH-ubiquinone oxidoreductase chain 4L (MT-ND4L) from Pusa hispida (Ringed seal).